Here is a 147-residue protein sequence, read N- to C-terminus: Large ribosomal subunit protein bL9 (147 aa).

The protein belongs to the bacterial ribosomal protein bL9 family.

In terms of biological role, binds to the 23S rRNA. This chain is Large ribosomal subunit protein bL9, found in Geobacter sp. (strain M21).